A 289-amino-acid chain; its full sequence is Oxaloacetate decarboxylase (289 aa).

Serine 50 provides a ligand contact to substrate. Aspartate 88 is a binding site for Mg(2+). Residues arginine 159 and histidine 235 each coordinate substrate.

It belongs to the isocitrate lyase/PEP mutase superfamily. Oxaloacetate decarboxylase family. As to quaternary structure, homotetramer; dimer of dimers. Mg(2+) is required as a cofactor.

The enzyme catalyses oxaloacetate + H(+) = pyruvate + CO2. Functionally, catalyzes the decarboxylation of oxaloacetate into pyruvate. Seems to play a role in maintaining cellular concentrations of bicarbonate and pyruvate. The protein is Oxaloacetate decarboxylase of Pseudomonas entomophila (strain L48).